A 742-amino-acid chain; its full sequence is Phosphoribosylformylglycinamidine synthase subunit PurL (742 aa).

Residue H54 is part of the active site. Residues Y57 and K96 each coordinate ATP. E98 lines the Mg(2+) pocket. Residues 99-102 and R121 each bind substrate; that span reads SHNH. Residue H100 is the Proton acceptor of the active site. D122 provides a ligand contact to Mg(2+). G225 and Q245 together coordinate substrate. D273 is a binding site for Mg(2+). Substrate is bound at residue 317-319; that stretch reads ESQ. G537 contributes to the ATP binding site. N538 provides a ligand contact to Mg(2+). S540 contributes to the substrate binding site.

The protein belongs to the FGAMS family. As to quaternary structure, monomer. Part of the FGAM synthase complex composed of 1 PurL, 1 PurQ and 2 PurS subunits.

The protein localises to the cytoplasm. The catalysed reaction is N(2)-formyl-N(1)-(5-phospho-beta-D-ribosyl)glycinamide + L-glutamine + ATP + H2O = 2-formamido-N(1)-(5-O-phospho-beta-D-ribosyl)acetamidine + L-glutamate + ADP + phosphate + H(+). It catalyses the reaction L-glutamine + H2O = L-glutamate + NH4(+). It functions in the pathway purine metabolism; IMP biosynthesis via de novo pathway; 5-amino-1-(5-phospho-D-ribosyl)imidazole from N(2)-formyl-N(1)-(5-phospho-D-ribosyl)glycinamide: step 1/2. In terms of biological role, part of the phosphoribosylformylglycinamidine synthase complex involved in the purines biosynthetic pathway. Catalyzes the ATP-dependent conversion of formylglycinamide ribonucleotide (FGAR) and glutamine to yield formylglycinamidine ribonucleotide (FGAM) and glutamate. The FGAM synthase complex is composed of three subunits. PurQ produces an ammonia molecule by converting glutamine to glutamate. PurL transfers the ammonia molecule to FGAR to form FGAM in an ATP-dependent manner. PurS interacts with PurQ and PurL and is thought to assist in the transfer of the ammonia molecule from PurQ to PurL. This chain is Phosphoribosylformylglycinamidine synthase subunit PurL, found in Bacillus subtilis (strain 168).